The following is a 533-amino-acid chain: Zinc finger protein 692 (533 aa).

Disordered stretches follow at residues S124–L251 and T290–E310. Residues E149–P178 show a composition bias toward basic and acidic residues. A compositionally biased stretch (acidic residues) spans Q190–L208. S233 is modified (phosphoserine). The segment covering T290 to N305 has biased composition (polar residues). C2H2-type zinc fingers lie at residues M329 to H354, F360 to H384, Y390 to H412, L418 to H440, and F449 to H472. S471 is modified (phosphoserine). A disordered region spans residues V478–S533. The segment covering S481 to S492 has biased composition (low complexity). Polar residues predominate over residues P500–S521.

This sequence belongs to the krueppel C2H2-type zinc-finger protein family. Post-translationally, phosphorylation at Ser-471 results in loss of DNA-binding activity.

It is found in the nucleus. Its function is as follows. May act as an transcriptional repressor for PCK1 gene expression, in turns may participate in the hepatic gluconeogenesis regulation through the activated AMPK signaling pathway. In Rattus norvegicus (Rat), this protein is Zinc finger protein 692.